The sequence spans 154 residues: MGLSDGEWQLVLNVWGKVEADLAGHGQDILIRLFKGHPETLEKFDKFKHLKTEADMKASEDLKKHGITVLTALGAILKKKGHHDAELKPLAQSHATKHKIPIKYLEFISEAIIHVLHSRHPAEFGADAQGAMNKALELFRKDIAAKYKELGFHG.

Residues 2 to 148 (GLSDGEWQLV…FRKDIAAKYK (147 aa)) form the Globin domain. Ser4 carries the post-translational modification Phosphoserine. His65 serves as a coordination point for nitrite. Residue His65 coordinates O2. Thr68 carries the post-translational modification Phosphothreonine. A heme b-binding site is contributed by His94.

It belongs to the globin family. As to quaternary structure, monomeric.

The protein resides in the cytoplasm. It localises to the sarcoplasm. The catalysed reaction is Fe(III)-heme b-[protein] + nitric oxide + H2O = Fe(II)-heme b-[protein] + nitrite + 2 H(+). It carries out the reaction H2O2 + AH2 = A + 2 H2O. Monomeric heme protein which primary function is to store oxygen and facilitate its diffusion within muscle tissues. Reversibly binds oxygen through a pentacoordinated heme iron and enables its timely and efficient release as needed during periods of heightened demand. Depending on the oxidative conditions of tissues and cells, and in addition to its ability to bind oxygen, it also has a nitrite reductase activity whereby it regulates the production of bioactive nitric oxide. Under stress conditions, like hypoxia and anoxia, it also protects cells against reactive oxygen species thanks to its pseudoperoxidase activity. The chain is Myoglobin (MB) from Peponocephala electra (Melon-headed whale).